A 474-amino-acid polypeptide reads, in one-letter code: Dipeptidase A (474 aa).

Cys-6 is an active-site residue.

Belongs to the peptidase C69 family. In terms of assembly, homooctamer.

The enzyme catalyses an L-aminoacyl-L-amino acid + H2O = 2 an L-alpha-amino acid. Inhibited by Zn(2+), Cu(2+), Ca(2+) and Cd(2+). Hydrolyzes a wide range of dipeptides but unable to hydrolyze dipeptides containing proline. Highest activity against Met-Ala. The sequence is that of Dipeptidase A (pepDA) from Lactobacillus helveticus (Lactobacillus suntoryeus).